Here is a 523-residue protein sequence, read N- to C-terminus: UDP-N-acetylmuramyl-tripeptide synthetase (523 aa).

Ser-38 serves as a coordination point for UDP-N-acetyl-alpha-D-muramoyl-L-alanyl-D-glutamate. Position 116-122 (116-122) interacts with ATP; that stretch reads GTKGKTT. Residues 162–163, Ser-189, and Arg-197 each bind UDP-N-acetyl-alpha-D-muramoyl-L-alanyl-D-glutamate; that span reads TT. Position 231 is an N6-carboxylysine (Lys-231).

The protein belongs to the MurCDEF family. MurE subfamily. Post-translationally, carboxylation is probably crucial for Mg(2+) binding and, consequently, for the gamma-phosphate positioning of ATP.

It is found in the cytoplasm. Its pathway is cell wall biogenesis; peptidoglycan biosynthesis. Catalyzes the addition of an amino acid to the nucleotide precursor UDP-N-acetylmuramoyl-L-alanyl-D-glutamate (UMAG) in the biosynthesis of bacterial cell-wall peptidoglycan. This is UDP-N-acetylmuramyl-tripeptide synthetase from Lactobacillus acidophilus (strain ATCC 700396 / NCK56 / N2 / NCFM).